The primary structure comprises 320 residues: Lipoyl synthase (320 aa).

Residues 1–28 (MVTVVDRVTDRRLRHPEKAHRPDTSVQK) form a disordered region. Over residues 19–28 (AHRPDTSVQK) the composition is skewed to basic and acidic residues. Residues C59, C64, C70, C85, C89, C92, and S298 each coordinate [4Fe-4S] cluster. The Radical SAM core domain occupies 71–287 (WSQRHASFMI…AKIGKVKGFL (217 aa)).

The protein belongs to the radical SAM superfamily. Lipoyl synthase family. The cofactor is [4Fe-4S] cluster.

The protein localises to the cytoplasm. The catalysed reaction is [[Fe-S] cluster scaffold protein carrying a second [4Fe-4S](2+) cluster] + N(6)-octanoyl-L-lysyl-[protein] + 2 oxidized [2Fe-2S]-[ferredoxin] + 2 S-adenosyl-L-methionine + 4 H(+) = [[Fe-S] cluster scaffold protein] + N(6)-[(R)-dihydrolipoyl]-L-lysyl-[protein] + 4 Fe(3+) + 2 hydrogen sulfide + 2 5'-deoxyadenosine + 2 L-methionine + 2 reduced [2Fe-2S]-[ferredoxin]. Its pathway is protein modification; protein lipoylation via endogenous pathway; protein N(6)-(lipoyl)lysine from octanoyl-[acyl-carrier-protein]: step 2/2. Catalyzes the radical-mediated insertion of two sulfur atoms into the C-6 and C-8 positions of the octanoyl moiety bound to the lipoyl domains of lipoate-dependent enzymes, thereby converting the octanoylated domains into lipoylated derivatives. The protein is Lipoyl synthase of Bartonella henselae (strain ATCC 49882 / DSM 28221 / CCUG 30454 / Houston 1) (Rochalimaea henselae).